Here is a 214-residue protein sequence, read N- to C-terminus: Soluble inorganic pyrophosphatase (214 aa).

3 residues coordinate substrate: Lys64, Arg78, and Tyr90. 3 residues coordinate Mg(2+): Asp100, Asp105, and Asp137. Tyr174 is a binding site for substrate.

Belongs to the PPase family. The cofactor is Mg(2+).

The protein localises to the cytoplasm. The enzyme catalyses diphosphate + H2O = 2 phosphate + H(+). The protein is Soluble inorganic pyrophosphatase (IPP) of Oryza sativa subsp. indica (Rice).